The chain runs to 211 residues: Arginine exporter protein ArgO (211 aa).

6 helical membrane-spanning segments follow: residues M1 to P21, L37 to G57, L68 to L88, I111 to V131, W147 to A167, and I182 to G202.

The protein belongs to the LysE/ArgO transporter (TC 2.A.75) family.

The protein resides in the cell inner membrane. It catalyses the reaction L-arginine(in) = L-arginine(out). In terms of biological role, involved in the export of arginine. Important to control the intracellular level of arginine and the correct balance between arginine and lysine. The polypeptide is Arginine exporter protein ArgO (Klebsiella pneumoniae (strain 342)).